The sequence spans 272 residues: NAD kinase (272 aa).

D50 functions as the Proton acceptor in the catalytic mechanism. NAD(+)-binding positions include 50 to 51 (DG), 126 to 127 (NE), R152, D154, 165 to 170 (TAYNKS), and A189.

Belongs to the NAD kinase family. The cofactor is a divalent metal cation.

Its subcellular location is the cytoplasm. It carries out the reaction NAD(+) + ATP = ADP + NADP(+) + H(+). In terms of biological role, involved in the regulation of the intracellular balance of NAD and NADP, and is a key enzyme in the biosynthesis of NADP. Catalyzes specifically the phosphorylation on 2'-hydroxyl of the adenosine moiety of NAD to yield NADP. This is NAD kinase from Streptococcus pneumoniae serotype 19F (strain G54).